Here is a 200-residue protein sequence, read N- to C-terminus: Exopolysaccharide production protein PSS (200 aa).

This sequence belongs to the bacterial sugar transferase family.

The sequence is that of Exopolysaccharide production protein PSS (pss) from Rhizobium leguminosarum bv. phaseoli.